The sequence spans 672 residues: COBRA-like protein 10 (672 aa).

A signal peptide spans 1-35; the sequence is MRAIDVKTGMKIPWDVRYSLSLFIFLSSILFLSNG. N-linked (GlcNAc...) asparagine glycans are attached at residues Asn-79, Asn-135, Asn-264, Asn-328, Asn-339, Asn-368, Asn-422, Asn-442, Asn-483, Asn-562, Asn-570, and Asn-589. One can recognise a CBM2 domain in the interval 502-607; that stretch reads KLPCPDNCGV…PVPGKQQSVI (106 aa). Residue Ser-646 is the site of GPI-anchor amidated serine attachment. The propeptide at 647–672 is removed in mature form; the sequence is SGHRRGISVSMSFVFATIAAFALMMD. A Required for processing by the PIG complex, a critical step for apical plasma membrane localization in pollen tubes motif is present at residues 664 to 672; the sequence is IAAFALMMD.

The protein belongs to the COBRA family. In terms of processing, the GPI-anchor attachment at Ser-646 requires APTG1. In terms of tissue distribution, expressed in roots, stems, leaves, flowers and siliques. Specific expression in the pollen tube.

The protein resides in the cell membrane. The protein localises to the cytoplasm. It localises to the vesicle. Its function is as follows. Involved in the deposition of apical pectin cap and cellulose microfibrils in pollen tubes. Not essential for pollen development, hydration or germination, but required for pollen tubes growth in the female transmitting tract of pistil and toward micropyles, via the perception of ovule guidance cues. In Arabidopsis thaliana (Mouse-ear cress), this protein is COBRA-like protein 10.